Consider the following 184-residue polypeptide: Interferon alpha-3 (184 aa).

Positions 1 to 23 are cleaved as a signal peptide; the sequence is MALPVSLLMALVVLSCHSSCSLG. 2 disulfide bridges follow: Cys24/Cys122 and Cys52/Cys162.

The protein belongs to the alpha/beta interferon family.

Its subcellular location is the secreted. In terms of biological role, produced by macrophages, IFN-alpha have antiviral activities. Interferon stimulates the production of two enzymes: a protein kinase and an oligoadenylate synthetase. The sequence is that of Interferon alpha-3 from Equus caballus (Horse).